Here is a 217-residue protein sequence, read N- to C-terminus: Thiamine-phosphate synthase (217 aa).

Residues 39 to 43 and asparagine 71 contribute to the 4-amino-2-methyl-5-(diphosphooxymethyl)pyrimidine site; that span reads QLRRK. Positions 72 and 91 each coordinate Mg(2+). Serine 110 lines the 4-amino-2-methyl-5-(diphosphooxymethyl)pyrimidine pocket. 137-139 contacts 2-[(2R,5Z)-2-carboxy-4-methylthiazol-5(2H)-ylidene]ethyl phosphate; that stretch reads SPT. Position 140 (lysine 140) interacts with 4-amino-2-methyl-5-(diphosphooxymethyl)pyrimidine. 2-[(2R,5Z)-2-carboxy-4-methylthiazol-5(2H)-ylidene]ethyl phosphate-binding positions include glycine 173 and 193-194; that span reads IS.

The protein belongs to the thiamine-phosphate synthase family. It depends on Mg(2+) as a cofactor.

It carries out the reaction 2-[(2R,5Z)-2-carboxy-4-methylthiazol-5(2H)-ylidene]ethyl phosphate + 4-amino-2-methyl-5-(diphosphooxymethyl)pyrimidine + 2 H(+) = thiamine phosphate + CO2 + diphosphate. The catalysed reaction is 2-(2-carboxy-4-methylthiazol-5-yl)ethyl phosphate + 4-amino-2-methyl-5-(diphosphooxymethyl)pyrimidine + 2 H(+) = thiamine phosphate + CO2 + diphosphate. The enzyme catalyses 4-methyl-5-(2-phosphooxyethyl)-thiazole + 4-amino-2-methyl-5-(diphosphooxymethyl)pyrimidine + H(+) = thiamine phosphate + diphosphate. It participates in cofactor biosynthesis; thiamine diphosphate biosynthesis; thiamine phosphate from 4-amino-2-methyl-5-diphosphomethylpyrimidine and 4-methyl-5-(2-phosphoethyl)-thiazole: step 1/1. In terms of biological role, condenses 4-methyl-5-(beta-hydroxyethyl)thiazole monophosphate (THZ-P) and 2-methyl-4-amino-5-hydroxymethyl pyrimidine pyrophosphate (HMP-PP) to form thiamine monophosphate (TMP). In Bordetella parapertussis (strain 12822 / ATCC BAA-587 / NCTC 13253), this protein is Thiamine-phosphate synthase.